The sequence spans 389 residues: Nuclear receptor subfamily 2 group F member 1-B (389 aa).

Positions 19–39 (DDQSAAGREHLQHRHSPKSAE) are disordered. The nuclear receptor DNA-binding region spans 51 to 126 (HVECVVCGDK…VGMRREAVQR (76 aa)). 2 consecutive NR C4-type zinc fingers follow at residues 54-74 (CVVCGDKSSGKHYGQFTCEGC) and 90-109 (CRANRNCPVDQHHRNQCQYC). Positions 152 to 378 (YLSGYISLLL…TLIRDMLLSG (227 aa)) constitute an NR LBD domain.

It belongs to the nuclear hormone receptor family. NR2 subfamily. As to expression, expressed the retina, where expression is restricted to the outer nuclear layer.

It is found in the nucleus. In terms of biological role, putative transcription factor that is required in photoreceptor cells precursors during eye development. The chain is Nuclear receptor subfamily 2 group F member 1-B from Danio rerio (Zebrafish).